We begin with the raw amino-acid sequence, 326 residues long: GTP 3',8-cyclase (326 aa).

Positions 5–227 constitute a Radical SAM core domain; sequence GHGRTVDYLR…ALGREGASPS (223 aa). R14 contacts GTP. [4Fe-4S] cluster is bound by residues C21 and C25. Residue Y27 participates in S-adenosyl-L-methionine binding. Residue C28 participates in [4Fe-4S] cluster binding. Residue R64 participates in GTP binding. Position 68 (G68) interacts with S-adenosyl-L-methionine. T95 is a GTP binding site. S119 serves as a coordination point for S-adenosyl-L-methionine. Position 155 (K155) interacts with GTP. M189 provides a ligand contact to S-adenosyl-L-methionine. Residues C250 and C253 each coordinate [4Fe-4S] cluster. Residue 255 to 257 participates in GTP binding; it reads RIR. C267 is a [4Fe-4S] cluster binding site.

Belongs to the radical SAM superfamily. MoaA family. Monomer and homodimer. It depends on [4Fe-4S] cluster as a cofactor.

It catalyses the reaction GTP + AH2 + S-adenosyl-L-methionine = (8S)-3',8-cyclo-7,8-dihydroguanosine 5'-triphosphate + 5'-deoxyadenosine + L-methionine + A + H(+). The protein operates within cofactor biosynthesis; molybdopterin biosynthesis. Its function is as follows. Catalyzes the cyclization of GTP to (8S)-3',8-cyclo-7,8-dihydroguanosine 5'-triphosphate. The sequence is that of GTP 3',8-cyclase from Sulfurovum sp. (strain NBC37-1).